The sequence spans 203 residues: Thymidylate kinase (203 aa).

G9–T16 contacts ATP.

This sequence belongs to the thymidylate kinase family.

It catalyses the reaction dTMP + ATP = dTDP + ADP. Functionally, phosphorylation of dTMP to form dTDP in both de novo and salvage pathways of dTTP synthesis. The chain is Thymidylate kinase from Staphylococcus haemolyticus (strain JCSC1435).